A 391-amino-acid polypeptide reads, in one-letter code: Phosphoprotein (391 aa).

Residues 1 to 194 (MDQFIKQDET…GSLSGATLYA (194 aa)) form an N-terminus domain region. T10, T16, T91, T150, and T165 each carry phosphothreonine. S188 carries the phosphoserine modification. The interval 216–279 (ISANEIMDLL…MATVKIMDPG (64 aa)) is multimerization. Positions 218-245 (ANEIMDLLRGMDARLQHLEQKVDKVLAQ) form a coiled coil. T250 is modified (phosphothreonine). Residue S257 is modified to Phosphoserine. Residues T258 and T282 each carry the phosphothreonine modification. S292 and S294 each carry phosphoserine. T298 bears the Phosphothreonine mark. S301 and S374 each carry phosphoserine. The interval 343 to 391 (AGQKVMITKMITDCVANPQMKQAFEQRLAKASTEDALNDIKRDIIRSAI) is interaction with the nucleoprotein. T375 carries the post-translational modification Phosphothreonine.

It belongs to the rubulavirus/avulavirus P protein family. As to quaternary structure, homotetramer. Interacts (via multimerization domain) with polymerase L; this interaction forms the polymerase L-P complex. Interacts (via N-terminus) with N0 (via Ncore); this interaction allows P to chaperon N0 to avoid N polymerization before encapsidation. Interacts (via C-terminus) with N-RNA template; this interaction positions the polymerase on the template for both transcription and replication. Interacts with host RPS6KB1 kinase; this interaction may play a role in the viral replication and transcription.

The protein localises to the virion. Functionally, essential cofactor of the RNA polymerase L that plays a central role in the transcription and replication by forming the polymerase complex with RNA polymerase L and recruiting L to the genomic N-RNA template for RNA synthesis. Also plays a central role in the encapsidation of nascent RNA chains by forming the encapsidation complex with the nucleocapsid protein N (N-P complex). Acts as a chaperone for newly synthesized free N protein, so-called N0, allowing encapsidation of nascent RNA chains during replication. The nucleoprotein protein N prevents excessive phosphorylation of P, which leads to down-regulation of viral transcription/ replication. Participates, together with N, in the formation of viral factories (viroplasms), which are large inclusions in the host cytoplasm where replication takes place. The protein is Phosphoprotein of Homo sapiens (Human).